The chain runs to 532 residues: Protoporphyrinogen oxidase (532 aa).

FAD-binding positions include 9–14 (GSGISG), I289, and 511–513 (VGI).

Belongs to the protoporphyrinogen/coproporphyrinogen oxidase family. Protoporphyrinogen oxidase subfamily. Requires FAD as cofactor.

The protein localises to the mitochondrion. The catalysed reaction is protoporphyrinogen IX + 3 O2 = protoporphyrin IX + 3 H2O2. It functions in the pathway porphyrin-containing compound metabolism; protoporphyrin-IX biosynthesis; protoporphyrin-IX from protoporphyrinogen-IX: step 1/1. Catalyzes the 6-electron oxidation of protoporphyrinogen-IX to form protoporphyrin-IX. The chain is Protoporphyrinogen oxidase (ppox) from Dictyostelium discoideum (Social amoeba).